We begin with the raw amino-acid sequence, 510 residues long: Aspartate kinase FUB3 (510 aa).

ACT domains follow at residues 372–440 (ILSN…VLPD) and 446–510 (LVGA…KNAM).

Belongs to the aspartokinase family.

The catalysed reaction is L-aspartate + ATP = 4-phospho-L-aspartate + ADP. It functions in the pathway mycotoxin biosynthesis. In terms of biological role, aspartate kinase; part of the gene cluster that mediates the biosynthesis of fusaric acid, a mycotoxin with low to moderate toxicity to animals and humans, but with high phytotoxic properties. L-aspartate is suggested as fusaric acid amino acid precursor that is activated and further processed to O-acetyl-L-homoserine by cluster enzymes aspartate kinase FUB3 and homoserine O-acetyltransferase FUB5, as well as enzymes of the primary metabolism. The polyketide synthase (PKS) FUB1 generates the triketide trans-2-hexenal which is presumptively released by the hydrolase FUB4 and linked to the NRPS-bound amino acid precursor by NAD(P)-dependent dehydrogenase FUB6. FUB1, FUB4, and the non-canonical NRPS Fub8 may form an enzyme complex. Further processing of the NRPS-bound intermediate might be carried out by FUB6 and the sulfhydrylase FUB7, enabling a spontaneous electrocyclization to close the carbon backbone of fusaric acid. Dihydrofusaric acid is likely to be released via reduction by the thioester reductase (TR) domain of FUB8 whereupon the final oxidation to fusaric acid may (also) be performed by the FMN-dependent dehydrogenase FUB9. This Gibberella moniliformis (strain M3125 / FGSC 7600) (Maize ear and stalk rot fungus) protein is Aspartate kinase FUB3.